The following is a 155-amino-acid chain: Chromosomal passenger complex protein bir-1 (155 aa).

Residues 20–87 (RLMTFKNFEY…KRDEPCEFVR (68 aa)) form a BIR repeat. Residues Cys-57, Cys-60, His-76, and Cys-83 each coordinate Zn(2+).

It belongs to the IAP family. In terms of assembly, component of the CPC complex which consists of icp-1; csc-1; bir-1 and air-2. Within the complex, interacts with csc-1, icp-1 and air-2. Interacts with csc-1 in a zinc-dependent-manner; the interaction is direct. Expressed in oocytes and sperm.

It is found in the chromosome. The protein resides in the cytoplasm. The protein localises to the cytoskeleton. It localises to the spindle. Its subcellular location is the midbody. Its function is as follows. Component of the chromosomal passenger complex (CPC), a complex that acts as a key regulator of chromosome segregation and cytokinesis. The CPC complex has essential functions at the centromere in ensuring correct chromosome condensation, alignment and segregation. In the complex, required to direct the Aurora B/air-2 kinase to chromosomes. Also functions in spindle midzone formation and in the formation of polar bodies during oogenesis. Required for the localization of the kinetochore component hcp-1 to chromosomes. Involved in the positive regulation of transcription. Involved in the transcriptional regulation of collagen genes. The protein is Chromosomal passenger complex protein bir-1 of Caenorhabditis elegans.